A 265-amino-acid chain; its full sequence is Glutamate racemase (265 aa).

Substrate-binding positions include 12–13 (DS) and 44–45 (YG). The active-site Proton donor/acceptor is Cys75. A substrate-binding site is contributed by 76-77 (NT). Catalysis depends on Cys186, which acts as the Proton donor/acceptor. Position 187–188 (187–188 (TH)) interacts with substrate.

Belongs to the aspartate/glutamate racemases family.

It catalyses the reaction L-glutamate = D-glutamate. Its pathway is cell wall biogenesis; peptidoglycan biosynthesis. Its function is as follows. Provides the (R)-glutamate required for cell wall biosynthesis. This chain is Glutamate racemase, found in Pseudomonas putida (strain GB-1).